We begin with the raw amino-acid sequence, 308 residues long: tRNA dimethylallyltransferase (308 aa).

8 to 15 is an ATP binding site; that stretch reads GPTGTGKS. 10–15 contacts substrate; it reads TGTGKS.

Belongs to the IPP transferase family. In terms of assembly, monomer. It depends on Mg(2+) as a cofactor.

The enzyme catalyses adenosine(37) in tRNA + dimethylallyl diphosphate = N(6)-dimethylallyladenosine(37) in tRNA + diphosphate. Its function is as follows. Catalyzes the transfer of a dimethylallyl group onto the adenine at position 37 in tRNAs that read codons beginning with uridine, leading to the formation of N6-(dimethylallyl)adenosine (i(6)A). This is tRNA dimethylallyltransferase from Mycolicibacterium vanbaalenii (strain DSM 7251 / JCM 13017 / BCRC 16820 / KCTC 9966 / NRRL B-24157 / PYR-1) (Mycobacterium vanbaalenii).